We begin with the raw amino-acid sequence, 485 residues long: Hexokinase-1 (485 aa).

One can recognise a Hexokinase domain in the interval 21-468 (KELMDEIHQL…SGAGAAVIAA (448 aa)). The segment at 75–209 (TGKESGNYLA…ELPIEIVALI (135 aa)) is hexokinase small subdomain. ATP is bound by residues 86-91 (DLGGTN) and Lys-111. Substrate contacts are provided by residues Ser-158, 175–176 (TK), 210–211 (ND), and Asn-237. The segment at 210 to 457 (NDTVGTLIAS…DPITIVPAED (248 aa)) is hexokinase large subdomain. Ser-245 carries the post-translational modification Phosphoserine. Glu-269 contacts substrate. Ser-272 carries the post-translational modification Phosphoserine. Glu-302 is a substrate binding site. ATP is bound by residues 307 to 308 (GY), 344 to 348 (TSYPA), and 419 to 423 (SVYNK).

The protein belongs to the hexokinase family. In terms of assembly, homodimer.

The enzyme catalyses a D-hexose + ATP = a D-hexose 6-phosphate + ADP + H(+). The catalysed reaction is D-fructose + ATP = D-fructose 6-phosphate + ADP + H(+). It carries out the reaction D-glucose + ATP = D-glucose 6-phosphate + ADP + H(+). The protein operates within carbohydrate metabolism; hexose metabolism. It participates in carbohydrate degradation; glycolysis; D-glyceraldehyde 3-phosphate and glycerone phosphate from D-glucose: step 1/4. Its activity is regulated as follows. Subject to allosteric control. Substrate inhibition by ATP. Catalyzes the phosphorylation of hexose, such as D-glucose and D-fructose, to hexose 6-phosphate (D-glucose 6-phosphate and D-fructose 6-phosphate, respectively). Mediates the initial step of glycolysis by catalyzing phosphorylation of D-glucose to D-glucose 6-phosphate. In Saccharomyces cerevisiae (strain ATCC 204508 / S288c) (Baker's yeast), this protein is Hexokinase-1 (HXK1).